The following is a 300-amino-acid chain: Alpha-tubulin N-acetyltransferase 1 (300 aa).

The region spanning 1–190 (MEFPFDVDAL…NNFVIFEGFF (190 aa)) is the N-acetyltransferase domain. Position 56 is an N6-acetyllysine; by autocatalysis (Lys-56). 124–137 (FYIHESLQRHGHGR) provides a ligand contact to acetyl-CoA. Position 146 is an N6-acetyllysine; by autocatalysis (Lys-146). 160–169 (SQKLLKFLNK) lines the acetyl-CoA pocket. N6-acetyllysine; by autocatalysis is present on residues Lys-210 and Lys-221. Disordered regions lie at residues 229–263 (PLNR…RPFV) and 280–300 (TARL…RRTR). Phosphoserine occurs at positions 249 and 253. Arg-282 is subject to Asymmetric dimethylarginine. A Phosphoserine modification is found at Ser-292. Position 300 is an omega-N-methylarginine (Arg-300).

Belongs to the acetyltransferase ATAT1 family. In terms of assembly, component of the BBSome complex. Interacts with AP2 alpha-adaptins, including AP2A2, but not with AP1 gamma-adaptin (AP1G1/AP1G2); this interaction is required for efficient alpha-tubulin acetylation, hence clathrin-coated pits are sites of microtubule acetylation. Post-translationally, autoacetylation strongly increases tubulin acetylation.

The protein localises to the cytoplasm. It is found in the membrane. It localises to the clathrin-coated pit. Its subcellular location is the cell junction. The protein resides in the focal adhesion. The protein localises to the cell projection. It is found in the axon. It localises to the cytoskeleton. Its subcellular location is the spindle. The catalysed reaction is L-lysyl-[alpha-tubulin] + acetyl-CoA = N(6)-acetyl-L-lysyl-[alpha-tubulin] + CoA + H(+). Functionally, specifically acetylates 'Lys-40' in alpha-tubulin on the lumenal side of microtubules. Promotes microtubule destabilization and accelerates microtubule dynamics; this activity may be independent of acetylation activity. Acetylates alpha-tubulin with a slow enzymatic rate, due to a catalytic site that is not optimized for acetyl transfer. Enters the microtubule through each end and diffuses quickly throughout the lumen of microtubules. Acetylates only long/old microtubules because of its slow acetylation rate since it does not have time to act on dynamically unstable microtubules before the enzyme is released. Required for normal sperm flagellar function. Promotes directional cell locomotion and chemotaxis, through AP2A2-dependent acetylation of alpha-tubulin at clathrin-coated pits that are concentrated at the leading edge of migrating cells. May facilitate primary cilium assembly. This chain is Alpha-tubulin N-acetyltransferase 1, found in Sus scrofa (Pig).